The primary structure comprises 460 residues: tRNA modification GTPase MnmE (460 aa).

3 residues coordinate (6S)-5-formyl-5,6,7,8-tetrahydrofolate: arginine 22, glutamate 87, and arginine 126. In terms of domain architecture, TrmE-type G spans 222-381 (GLKTAIIGKP…LENTIYNLVF (160 aa)). Asparagine 232 lines the K(+) pocket. GTP contacts are provided by residues 232–237 (NVGKSS), 251–257 (TDIPGTT), and 276–279 (DTAG). Serine 236 is a Mg(2+) binding site. Positions 251, 253, and 256 each coordinate K(+). A Mg(2+)-binding site is contributed by threonine 257. A (6S)-5-formyl-5,6,7,8-tetrahydrofolate-binding site is contributed by lysine 460.

It belongs to the TRAFAC class TrmE-Era-EngA-EngB-Septin-like GTPase superfamily. TrmE GTPase family. As to quaternary structure, homodimer. Heterotetramer of two MnmE and two MnmG subunits. Requires K(+) as cofactor.

Its subcellular location is the cytoplasm. Its function is as follows. Exhibits a very high intrinsic GTPase hydrolysis rate. Involved in the addition of a carboxymethylaminomethyl (cmnm) group at the wobble position (U34) of certain tRNAs, forming tRNA-cmnm(5)s(2)U34. The sequence is that of tRNA modification GTPase MnmE from Thermoanaerobacter sp. (strain X514).